The sequence spans 576 residues: MSTLRLKEAKVPSVQFVGDDDVLSHILDREGGTKLKKEKVQLLVNPQKVIKKAECELEKSDLEVLEDQNYVEVLGRNIQESLGNGSAVDGRNKVYSFQHRKHPEEMTKLALELAKTSGKIDPLASNDPKITKNIARKSKGHSSEKAPLENNNKNEFPSIQPHNVRKRLIASRSHCDSESEYSASSSEDDEEVAKDDEEDTNVVRCSKKSQGQNRLLPAPVSKEILPKKRKRDKAGDLVEEYFEAHSSSKVLTSDRTLQKLRRARVDQKTLRNLLSKFVPSFSTEIGQLNQQHERLFDKWILQLRLGFNIVLYGLGSKRDLLEKFRTTMLQDSIHVVINGFFPGISVKSILNSITEDVLSHMGTFQSVLDQRDWIMNRFKEDSSLELFLLIHNLDSQMLRGDNSQQILGQLSSLRNVYLIASIDHLNAPLMWDHAKQSLYNWLWYETTTYSPYTEETSYENSLLVKQSGSLPLSSLIHVLRSLTPNARGIFRLLMKYQLDNQDCPSYIGLSFQDFYQQCREAFLVNSDLTLRAQLTEFRDHKLIRTKKGTDGVEYLLIPVDSGTLADFLEKEEEEES.

One copy of the Involved in LRWD1-binding repeat lies at 1–100 (MSTLRLKEAK…RNKVYSFQHR (100 aa)). A Phosphothreonine modification is found at T116. A disordered region spans residues 119 to 218 (KIDPLASNDP…SQGQNRLLPA (100 aa)). Positions 149-161 (ENNNKNEFPSIQP) are enriched in polar residues. The segment covering 186–200 (SEDDEEVAKDDEEDT) has biased composition (acidic residues). S246 is subject to Phosphoserine.

The protein belongs to the ORC2 family. Component of ORC, a complex composed of at least 6 subunits: ORC1, ORC2, ORC3, ORC4, ORC5 and ORC6. ORC is regulated in a cell-cycle dependent manner. It is sequentially assembled at the exit from anaphase of mitosis and disassembled as cells enter S phase. Interacts with DBF4. Interacts with MCM10. Interacts with LRWD1 throughout the cell cycle; this interaction, which occurs only with non-ubiquitinated form of LRWD1, prevents LRWD1 ubiquitination and hence stabilizes the protein. Interacts with POLQ.

The protein localises to the nucleus. Component of the origin recognition complex (ORC) that binds origins of replication. DNA-binding is ATP-dependent. The specific DNA sequences that define origins of replication have not been identified yet. ORC is required to assemble the pre-replication complex necessary to initiate DNA replication. Binds histone H3 and H4 trimethylation marks H3K9me3, H3K20me3 and H4K27me3. Stabilizes LRWD1, by protecting it from ubiquitin-mediated proteasomal degradation. Also stabilizes ORC3. The protein is Origin recognition complex subunit 2 (Orc2) of Rattus norvegicus (Rat).